The chain runs to 482 residues: UDP-glycosyltransferase 1 (482 aa).

Asparagine 243 carries an N-linked (GlcNAc...) asparagine glycan. A helical membrane pass occupies residues 450-470; the sequence is IYLVYALVLGSAWWIGKTILG.

This sequence belongs to the glycosyltransferase 28 family.

The protein localises to the membrane. It catalyses the reaction exophillate aglycone + UDP-alpha-D-glucose = exophillate + UDP + H(+). It participates in secondary metabolite biosynthesis. Functionally, acts as a depside 2-O-glucosyltransferase that catalyzes the first glycosylation step during phaeomoniecin D biosynthesis by producing the intermediate exophillic acid which is further O-galactosylated into phaeomoniecin D by the C-galactosyltransferase OGT2. This chain is UDP-glycosyltransferase 1, found in Phaeomoniella chlamydospora (Phaeoacremonium chlamydosporum).